The following is a 120-amino-acid chain: Non-specific lipid-transfer protein 2 (120 aa).

A signal peptide spans 1-25; the sequence is MATSMKLACVALVMCMVVIAPMAEA. 4 cysteine pairs are disulfide-bonded: cysteine 29-cysteine 78, cysteine 39-cysteine 55, cysteine 56-cysteine 101, and cysteine 76-cysteine 115.

Belongs to the plant LTP family. Expressed in roots, stem, leaves and tendrils of the mature plant.

Functionally, plant non-specific lipid-transfer proteins transfer phospholipids as well as galactolipids across membranes. May play a role in wax or cutin deposition in the cell walls of expanding epidermal cells and certain secretory tissues. This Pisum sativum (Garden pea) protein is Non-specific lipid-transfer protein 2.